The chain runs to 397 residues: Erythromycin C-12 hydroxylase (397 aa).

Residue His74 to Glu75 coordinates substrate. Positions 81 and 85 each coordinate heme. Substrate is bound at residue Gln278. Heme is bound at residue Arg279. Positions Arg307–Arg322 are enriched in basic and acidic residues. A disordered region spans residues Arg307–Gly326. 2 residues coordinate heme: His337 and Cys339.

The protein belongs to the cytochrome P450 family. Monomer. Heme b is required as a cofactor.

It catalyses the reaction erythromycin D + NADPH + O2 + H(+) = erythromycin C + NADP(+) + H2O. Its pathway is antibiotic biosynthesis; erythromycin biosynthesis. Responsible for the C-12 hydroxylation of the macrolactone ring of erythromycin. Thus, EryK catalyzes the hydroxylation of erythromycin D (ErD) at the C-12 position to produce erythromycin C (ErC). Erythromycin B (ErB) is not a substrate for this enzyme. In Saccharopolyspora erythraea (strain ATCC 11635 / DSM 40517 / JCM 4748 / NBRC 13426 / NCIMB 8594 / NRRL 2338), this protein is Erythromycin C-12 hydroxylase (eryK).